The sequence spans 213 residues: Thymidylate kinase (213 aa).

Gly-10–Thr-17 contributes to the ATP binding site.

This sequence belongs to the thymidylate kinase family.

The catalysed reaction is dTMP + ATP = dTDP + ADP. Phosphorylation of dTMP to form dTDP in both de novo and salvage pathways of dTTP synthesis. The protein is Thymidylate kinase of Escherichia coli O157:H7 (strain EC4115 / EHEC).